Consider the following 269-residue polypeptide: uncharacterized protein (269 aa).

NADP(+) is bound at residue 15 to 41 (QKSVLITGCSSGIGLESALELKRQGFH). S146 contributes to the substrate binding site. The Proton acceptor role is filled by Y159.

It belongs to the short-chain dehydrogenases/reductases (SDR) family.

This is an uncharacterized protein from Escherichia coli O6:H1 (strain CFT073 / ATCC 700928 / UPEC).